Reading from the N-terminus, the 279-residue chain is Pantothenate synthetase (279 aa).

Residue 26-33 (MGNLHEGH) coordinates ATP. Histidine 33 serves as the catalytic Proton donor. Position 57 (glutamine 57) interacts with (R)-pantoate. Residue glutamine 57 coordinates beta-alanine. 144-147 (GKKD) provides a ligand contact to ATP. Glutamine 150 lines the (R)-pantoate pocket. ATP contacts are provided by residues valine 173 and 181 to 184 (LSSR).

This sequence belongs to the pantothenate synthetase family. Homodimer.

It localises to the cytoplasm. It carries out the reaction (R)-pantoate + beta-alanine + ATP = (R)-pantothenate + AMP + diphosphate + H(+). The protein operates within cofactor biosynthesis; (R)-pantothenate biosynthesis; (R)-pantothenate from (R)-pantoate and beta-alanine: step 1/1. Its function is as follows. Catalyzes the condensation of pantoate with beta-alanine in an ATP-dependent reaction via a pantoyl-adenylate intermediate. In Burkholderia ambifaria (strain MC40-6), this protein is Pantothenate synthetase.